The sequence spans 152 residues: Small ribosomal subunit protein uS5 (152 aa).

Residues 14–77 (FEEVIVNIGR…DDAHKNLVKV (64 aa)) form the S5 DRBM domain.

The protein belongs to the universal ribosomal protein uS5 family. As to quaternary structure, part of the 30S ribosomal subunit. Contacts proteins S4 and S8.

With S4 and S12 plays an important role in translational accuracy. Its function is as follows. Located at the back of the 30S subunit body where it stabilizes the conformation of the head with respect to the body. This is Small ribosomal subunit protein uS5 from Sulfurovum sp. (strain NBC37-1).